The following is a 198-amino-acid chain: Fucoxanthin-chlorophyll a-c binding protein B, chloroplastic (198 aa).

Residues 1 to 31 (MKFTVFASLFASAAAFAPAQQAARTSVATNM) constitute a chloroplast transit peptide. A run of 3 helical transmembrane segments spans residues 73–94 (ISML…GGDI), 114–134 (IPQA…TSVM), and 174–196 (GRAA…NILP).

The protein belongs to the fucoxanthin chlorophyll protein family. The LHC complex of chromophytic algae is composed of fucoxanthin, chlorophyll A and C bound non-covalently by fucoxanthin chlorophyll proteins (FCPs). The ratio of the pigments in LHC; fucoxanthin: chlorophyll C: chlorophyll A; (0.6-1): (0.1-0.3): (1).

Its subcellular location is the plastid. It is found in the chloroplast thylakoid membrane. Functionally, the light-harvesting complex (LHC) functions as a light receptor, it captures and delivers excitation energy to photosystems with which it is closely associated. Energy is transferred from the carotenoid and chlorophyll C (or B) to chlorophyll A and the photosynthetic reaction centers where it is used to synthesize ATP and reducing power. The protein is Fucoxanthin-chlorophyll a-c binding protein B, chloroplastic (FCPB) of Phaeodactylum tricornutum (Diatom).